A 635-amino-acid polypeptide reads, in one-letter code: Threonine--tRNA ligase (635 aa).

Residues 1-61 form the TGS domain; the sequence is MINISFPDGS…DNDCKLRILT (61 aa). Positions 242–533 are catalytic; it reads DHRKLGRELD…LIEEYAGRFP (292 aa). Residues cysteine 333, histidine 384, and histidine 510 each contribute to the Zn(2+) site.

Belongs to the class-II aminoacyl-tRNA synthetase family. Homodimer. Requires Zn(2+) as cofactor.

The protein resides in the cytoplasm. The catalysed reaction is tRNA(Thr) + L-threonine + ATP = L-threonyl-tRNA(Thr) + AMP + diphosphate + H(+). Catalyzes the attachment of threonine to tRNA(Thr) in a two-step reaction: L-threonine is first activated by ATP to form Thr-AMP and then transferred to the acceptor end of tRNA(Thr). Also edits incorrectly charged L-seryl-tRNA(Thr). In Rickettsia africae (strain ESF-5), this protein is Threonine--tRNA ligase.